The chain runs to 263 residues: GTP cyclohydrolase 1 type 2 homolog (263 aa).

5 residues coordinate a divalent metal cation: histidine 65, histidine 66, aspartate 104, histidine 225, and glutamate 229.

Belongs to the GTP cyclohydrolase I type 2/NIF3 family. In terms of assembly, homohexamer.

The polypeptide is GTP cyclohydrolase 1 type 2 homolog (Nostoc sp. (strain PCC 7120 / SAG 25.82 / UTEX 2576)).